The primary structure comprises 261 residues: Expansin-B2 (261 aa).

An N-terminal signal peptide occupies residues 1–24 (MAGASAKVVAMLLSVLATYGFAAG). Residues 51–157 (GGACGFKNTN…RRVPCYHRGL (107 aa)) form the Expansin-like EG45 domain. Disulfide bonds link Cys-54–Cys-82, Cys-85–Cys-152, and Cys-90–Cys-96. The region spanning 170–256 (VYLAVLVEFA…NWRANTNYGS (87 aa)) is the Expansin-like CBD domain.

Belongs to the expansin family. Expansin B subfamily. In terms of tissue distribution, expressed in roots.

The protein localises to the secreted. It localises to the cell wall. It is found in the membrane. Its function is as follows. May cause loosening and extension of plant cell walls by disrupting non-covalent bonding between cellulose microfibrils and matrix glucans. No enzymatic activity has been found. May be required for rapid internodal elongation in deepwater rice during submergence. The chain is Expansin-B2 (EXPB2) from Oryza sativa subsp. japonica (Rice).